The following is a 343-amino-acid chain: MVSFKAGINLGGWISQYQVFSKEHFDTFITEKDIETIAEAGFDHVRLPFDYPIIESDDNVGEYKEDGLSYIDRCLEWCKKYNLGLVLDMHHAPGYRFQDFKTSTLFEDPNQQKRFVDIWRFLAKRYINEREHIAFELLNEVVEPDSTRWNKLMLEYIKAIREIDSTMWLYIGGNNYNSPDELKNLADIDDDYIVYNFHFYNPFFFTHQKAHWSESAMAYNRTVKYPGQYEGIEEFVKNNPKYSFMMELNNLKLNKELLRKDLKPAIEFREKKKCKLYCGEFGVIAIADLESRIKWHEDYISLLEEYDIGGAVWNYKKMDFEIYNEDRKPVSQELVNILARRKT.

The Proton donor role is filled by Glu-140. The active-site Nucleophile is Glu-280.

This sequence belongs to the glycosyl hydrolase 5 (cellulase A) family.

It catalyses the reaction Endohydrolysis of (1-&gt;4)-beta-D-glucosidic linkages in cellulose, lichenin and cereal beta-D-glucans.. It functions in the pathway glycan metabolism; cellulose degradation. Functionally, this enzyme catalyzes the endohydrolysis of 1,4-beta-glucosidic linkages in cellulose, lichenin and cereal beta-D-glucans. The sequence is that of Endoglucanase C (celC) from Acetivibrio thermocellus (Hungateiclostridium thermocellum).